Consider the following 216-residue polypeptide: MKQDSRFPNLFITDHPLIQHKLTHMRDKDTSTRTFRELLREITLLMGYEITRNLPITTKRVETPLVAVDAPVIAGKKLAIVPVLRAGIGMSDGLLDLVPSARVGHIGVYRAEDHRPVEYLVRLPDLEDRIFILCDPMVATGYSAVHAVDVLKRRNVPAANIMFVALVAAPEGVQVFQDAHPDVKLFVASLDSHLNEHAYIVPGLGDAGDRLFGTKN.

Residues Arg85, Arg110, and 135–143 (DPMVATGYS) contribute to the 5-phospho-alpha-D-ribose 1-diphosphate site. Residues Ile200 and 205-207 (GDA) each bind uracil. Residue Asp206 coordinates 5-phospho-alpha-D-ribose 1-diphosphate.

This sequence belongs to the UPRTase family. Requires Mg(2+) as cofactor.

The enzyme catalyses UMP + diphosphate = 5-phospho-alpha-D-ribose 1-diphosphate + uracil. The protein operates within pyrimidine metabolism; UMP biosynthesis via salvage pathway; UMP from uracil: step 1/1. With respect to regulation, allosterically activated by GTP. Functionally, catalyzes the conversion of uracil and 5-phospho-alpha-D-ribose 1-diphosphate (PRPP) to UMP and diphosphate. This chain is Uracil phosphoribosyltransferase, found in Burkholderia ambifaria (strain MC40-6).